Reading from the N-terminus, the 209-residue chain is Octanoyltransferase (209 aa).

Residues 28-203 enclose the BPL/LPL catalytic domain; the sequence is NATPETLLLL…RFQGLLDEWL (176 aa). Substrate is bound by residues 66 to 73, 133 to 135, and 146 to 148; these read RGGDVTFH, AIG, and GFA. Cys164 acts as the Acyl-thioester intermediate in catalysis.

It belongs to the LipB family.

It localises to the cytoplasm. The catalysed reaction is octanoyl-[ACP] + L-lysyl-[protein] = N(6)-octanoyl-L-lysyl-[protein] + holo-[ACP] + H(+). The protein operates within protein modification; protein lipoylation via endogenous pathway; protein N(6)-(lipoyl)lysine from octanoyl-[acyl-carrier-protein]: step 1/2. In terms of biological role, catalyzes the transfer of endogenously produced octanoic acid from octanoyl-acyl-carrier-protein onto the lipoyl domains of lipoate-dependent enzymes. Lipoyl-ACP can also act as a substrate although octanoyl-ACP is likely to be the physiological substrate. This chain is Octanoyltransferase, found in Pelobacter propionicus (strain DSM 2379 / NBRC 103807 / OttBd1).